The primary structure comprises 431 residues: Serine hydroxymethyltransferase (431 aa).

Residues Leu-128 and 132 to 134 contribute to the (6S)-5,6,7,8-tetrahydrofolate site; that span reads GHL. Lys-237 is subject to N6-(pyridoxal phosphate)lysine.

The protein belongs to the SHMT family. In terms of assembly, homodimer. It depends on pyridoxal 5'-phosphate as a cofactor.

The protein localises to the cytoplasm. The catalysed reaction is (6R)-5,10-methylene-5,6,7,8-tetrahydrofolate + glycine + H2O = (6S)-5,6,7,8-tetrahydrofolate + L-serine. Its pathway is one-carbon metabolism; tetrahydrofolate interconversion. It participates in amino-acid biosynthesis; glycine biosynthesis; glycine from L-serine: step 1/1. Functionally, catalyzes the reversible interconversion of serine and glycine with tetrahydrofolate (THF) serving as the one-carbon carrier. This reaction serves as the major source of one-carbon groups required for the biosynthesis of purines, thymidylate, methionine, and other important biomolecules. Also exhibits THF-independent aldolase activity toward beta-hydroxyamino acids, producing glycine and aldehydes, via a retro-aldol mechanism. This is Serine hydroxymethyltransferase from Ruegeria pomeroyi (strain ATCC 700808 / DSM 15171 / DSS-3) (Silicibacter pomeroyi).